The following is a 386-amino-acid chain: Branched-chain-amino-acid aminotransferase, cytosolic (386 aa).

Position 1 is an N-acetylmethionine (methionine 1). N6-(pyridoxal phosphate)lysine is present on lysine 222.

It belongs to the class-IV pyridoxal-phosphate-dependent aminotransferase family. In terms of assembly, homodimer. The cofactor is pyridoxal 5'-phosphate. Expressed in brain and kidney. Overexpressed in MYC-induced brain tumors, lymphomas, as well as in a teratocarcinoma cell line.

Its subcellular location is the cytoplasm. It carries out the reaction L-leucine + 2-oxoglutarate = 4-methyl-2-oxopentanoate + L-glutamate. It catalyses the reaction L-isoleucine + 2-oxoglutarate = (S)-3-methyl-2-oxopentanoate + L-glutamate. The enzyme catalyses L-valine + 2-oxoglutarate = 3-methyl-2-oxobutanoate + L-glutamate. In terms of biological role, catalyzes the first reaction in the catabolism of the essential branched chain amino acids leucine, isoleucine, and valine. In Mus musculus (Mouse), this protein is Branched-chain-amino-acid aminotransferase, cytosolic (Bcat1).